The chain runs to 204 residues: Holliday junction branch migration complex subunit RuvA (204 aa).

The domain I stretch occupies residues 1 to 64; that stretch reads MIGKLKGTID…EDQLKLFGFM (64 aa). A domain II region spans residues 65–143; it reads TALEREWFNL…AFAGEAINIG (79 aa). The interval 144–151 is flexible linker; it reads LKQELGEG. A domain III region spans residues 152 to 204; the sequence is VAAAPVADAVSALTNLGYSRDQAANAIAAAMKTAGEGADSAKLIRLGLKELAR.

It belongs to the RuvA family. Homotetramer. Forms an RuvA(8)-RuvB(12)-Holliday junction (HJ) complex. HJ DNA is sandwiched between 2 RuvA tetramers; dsDNA enters through RuvA and exits via RuvB. An RuvB hexamer assembles on each DNA strand where it exits the tetramer. Each RuvB hexamer is contacted by two RuvA subunits (via domain III) on 2 adjacent RuvB subunits; this complex drives branch migration. In the full resolvosome a probable DNA-RuvA(4)-RuvB(12)-RuvC(2) complex forms which resolves the HJ.

It is found in the cytoplasm. In terms of biological role, the RuvA-RuvB-RuvC complex processes Holliday junction (HJ) DNA during genetic recombination and DNA repair, while the RuvA-RuvB complex plays an important role in the rescue of blocked DNA replication forks via replication fork reversal (RFR). RuvA specifically binds to HJ cruciform DNA, conferring on it an open structure. The RuvB hexamer acts as an ATP-dependent pump, pulling dsDNA into and through the RuvAB complex. HJ branch migration allows RuvC to scan DNA until it finds its consensus sequence, where it cleaves and resolves the cruciform DNA. The sequence is that of Holliday junction branch migration complex subunit RuvA from Rhizobium johnstonii (strain DSM 114642 / LMG 32736 / 3841) (Rhizobium leguminosarum bv. viciae).